The chain runs to 109 residues: Ribonuclease P protein component (109 aa).

Belongs to the RnpA family. As to quaternary structure, consists of a catalytic RNA component (M1 or rnpB) and a protein subunit.

The enzyme catalyses Endonucleolytic cleavage of RNA, removing 5'-extranucleotides from tRNA precursor.. In terms of biological role, RNaseP catalyzes the removal of the 5'-leader sequence from pre-tRNA to produce the mature 5'-terminus. It can also cleave other RNA substrates such as 4.5S RNA. The protein component plays an auxiliary but essential role in vivo by binding to the 5'-leader sequence and broadening the substrate specificity of the ribozyme. This Mycoplasma mycoides subsp. mycoides SC (strain CCUG 32753 / NCTC 10114 / PG1) protein is Ribonuclease P protein component.